A 466-amino-acid polypeptide reads, in one-letter code: 3-isopropylmalate dehydratase large subunit (466 aa).

[4Fe-4S] cluster contacts are provided by cysteine 347, cysteine 407, and cysteine 410.

This sequence belongs to the aconitase/IPM isomerase family. LeuC type 1 subfamily. Heterodimer of LeuC and LeuD. The cofactor is [4Fe-4S] cluster.

The catalysed reaction is (2R,3S)-3-isopropylmalate = (2S)-2-isopropylmalate. It participates in amino-acid biosynthesis; L-leucine biosynthesis; L-leucine from 3-methyl-2-oxobutanoate: step 2/4. Its function is as follows. Catalyzes the isomerization between 2-isopropylmalate and 3-isopropylmalate, via the formation of 2-isopropylmaleate. In Pectobacterium atrosepticum (strain SCRI 1043 / ATCC BAA-672) (Erwinia carotovora subsp. atroseptica), this protein is 3-isopropylmalate dehydratase large subunit.